The following is a 163-amino-acid chain: Phosphopantetheine adenylyltransferase (163 aa).

Thr11 lines the substrate pocket. ATP contacts are provided by residues 11–12 (TF) and His19. Positions 43, 75, and 89 each coordinate substrate. ATP contacts are provided by residues 90 to 92 (GLR), Glu100, and 125 to 131 (YMFISAT).

The protein belongs to the bacterial CoaD family. In terms of assembly, homohexamer. Mg(2+) is required as a cofactor.

It is found in the cytoplasm. The enzyme catalyses (R)-4'-phosphopantetheine + ATP + H(+) = 3'-dephospho-CoA + diphosphate. It functions in the pathway cofactor biosynthesis; coenzyme A biosynthesis; CoA from (R)-pantothenate: step 4/5. Reversibly transfers an adenylyl group from ATP to 4'-phosphopantetheine, yielding dephospho-CoA (dPCoA) and pyrophosphate. This Azoarcus sp. (strain BH72) protein is Phosphopantetheine adenylyltransferase.